Reading from the N-terminus, the 416-residue chain is RNA-editing ligase 2, mitochondrial (416 aa).

A mitochondrion-targeting transit peptide spans 1–17 (MLRRLGVRHFRRTPLLF). ATP contacts are provided by residues 29–31 (TEI), 56–62 (EKVHGAN), Arg79, Glu126, Phe173, and 269–271 (KFK). Lys57 serves as the catalytic N6-AMP-lysine intermediate.

This sequence belongs to the RNA ligase 2 family. As to quaternary structure, component of the RNA editing complex, a 1600 kDa complex composed of at least 20 proteins.

The protein resides in the mitochondrion. The catalysed reaction is ATP + (ribonucleotide)n-3'-hydroxyl + 5'-phospho-(ribonucleotide)m = (ribonucleotide)n+m + AMP + diphosphate.. Its function is as follows. RNA editing in kinetoplastid mitochondria inserts and deletes uridylates at multiple sites in pre-mRNAs as directed by guide RNAs. This chain is RNA-editing ligase 2, mitochondrial (REL2), found in Trypanosoma brucei brucei (strain 927/4 GUTat10.1).